Consider the following 898-residue polypeptide: Dipeptidyl peptidase 8 (898 aa).

Residues Ser755, Asp833, and His865 each act as charge relay system in the active site.

Belongs to the peptidase S9B family. DPPIV subfamily. As to quaternary structure, homodimer. Forms a ternary complex with NLRP1, composed of a DPP8 homodimer, one full-length NLRP1 protein, and one cleaved C-terminus of NLRP1 (NACHT, LRR and PYD domains-containing protein 1, C-terminus). Forms a ternary complex with CARD8, composed of a DPP8 homodimer, one full-length NLRP1 protein, and one cleaved C-terminus of CARD8 (Caspase recruitment domain-containing protein 8, C-terminus). In the ternary complex, only one subunit of the DPP8 homodimer is bound to NLRP1 or CARD8. As to expression, ubiquitously expressed, with highest levels in testis, placenta, prostate, muscle and brain.

Its subcellular location is the cytoplasm. It catalyses the reaction Release of an N-terminal dipeptide, Xaa-Yaa-|-Zaa-, from a polypeptide, preferentially when Yaa is Pro, provided Zaa is neither Pro nor hydroxyproline.. Inhibited by zinc. Inhibited by the serine proteinase inhibitor 4-(2-aminoethyl)benzenesulphonyl fluoride (AEBSF), and by di-isopropylfluorophosphate. Specifically inhibited by isoindoline derivatives. Inhibited by Val-boroPro (Talabostat, PT-100), a non-selective inhibitor, which triggers pyroptosis in monocytes and macrophages. Its function is as follows. Dipeptidyl peptidase that cleaves off N-terminal dipeptides from proteins having a Pro or Ala residue at position 2. Acts as a key inhibitor of caspase-1-dependent monocyte and macrophage pyroptosis in resting cells by preventing activation of NLRP1 and CARD8. Sequesters the cleaved C-terminal part of NLRP1 and CARD8, which respectively constitute the active part of the NLRP1 and CARD8 inflammasomes, in a ternary complex, thereby preventing their oligomerization and activation. The dipeptidyl peptidase activity is required to suppress NLRP1 and CARD8; however, neither NLRP1 nor CARD8 are bona fide substrates of DPP8, suggesting the existence of substrate(s) required for NLRP1 and CARD8 inhibition. The polypeptide is Dipeptidyl peptidase 8 (Homo sapiens (Human)).